A 157-amino-acid polypeptide reads, in one-letter code: Protein Smg homolog (157 aa).

This sequence belongs to the Smg family.

This Shewanella putrefaciens (strain CN-32 / ATCC BAA-453) protein is Protein Smg homolog.